A 114-amino-acid chain; its full sequence is UPF0339 protein PM0519 (114 aa).

Tandem repeats lie at residues 11-59 (AKDG…NFEV) and 62-110 (AKND…IKDL).

This sequence belongs to the UPF0339 family. Duplicated subfamily.

The polypeptide is UPF0339 protein PM0519 (Pasteurella multocida (strain Pm70)).